The sequence spans 514 residues: Glutamyl-tRNA(Gln) amidotransferase subunit B, mitochondrial (514 aa).

This sequence belongs to the GatB/GatE family. GatB subfamily. Subunit of the heterotrimeric GatCAB amidotransferase (AdT) complex, composed of A, B and C subunits.

Its subcellular location is the mitochondrion. It catalyses the reaction L-glutamyl-tRNA(Gln) + L-glutamine + ATP + H2O = L-glutaminyl-tRNA(Gln) + L-glutamate + ADP + phosphate + H(+). Allows the formation of correctly charged Gln-tRNA(Gln) through the transamidation of misacylated Glu-tRNA(Gln) in the mitochondria. The reaction takes place in the presence of glutamine and ATP through an activated gamma-phospho-Glu-tRNA(Gln). This is Glutamyl-tRNA(Gln) amidotransferase subunit B, mitochondrial from Naegleria gruberi (Amoeba).